Reading from the N-terminus, the 125-residue chain is UPF0102 protein Rpic_3463 (125 aa).

Belongs to the UPF0102 family.

This Ralstonia pickettii (strain 12J) protein is UPF0102 protein Rpic_3463.